We begin with the raw amino-acid sequence, 451 residues long: Medium-chain fatty acid ethyl ester synthase/esterase 2 (451 aa).

Lysine 114 participates in a covalent cross-link: Glycyl lysine isopeptide (Lys-Gly) (interchain with G-Cter in ubiquitin). An AB hydrolase-1 domain is found at 166-430 (PLVVILHGLA…GGHLAYLDKD (265 aa)). Active-site charge relay system residues include serine 247, aspartate 395, and histidine 423.

It belongs to the AB hydrolase superfamily. AB hydrolase 4 family.

It catalyses the reaction an aliphatic alcohol + acetyl-CoA = an acetyl ester + CoA. Functionally, displays enzymatic activity both for medium-chain fatty acid (MCFA) ethyl ester synthesis and hydrolysis (esterase activity). MCFA are toxic for yeast and this enzyme could thus be involved in their detoxification by esterification. The chain is Medium-chain fatty acid ethyl ester synthase/esterase 2 (EHT1) from Saccharomyces cerevisiae (strain ATCC 204508 / S288c) (Baker's yeast).